The primary structure comprises 407 residues: Imidazolonepropionase (407 aa).

Fe(3+)-binding residues include His72 and His74. Positions 72 and 74 each coordinate Zn(2+). 4-imidazolone-5-propanoate contacts are provided by Arg81, Tyr144, and His177. Tyr144 lines the N-formimidoyl-L-glutamate pocket. His242 is a binding site for Fe(3+). His242 lines the Zn(2+) pocket. Gln245 contributes to the 4-imidazolone-5-propanoate binding site. Residue Asp317 participates in Fe(3+) binding. Asp317 contacts Zn(2+). The N-formimidoyl-L-glutamate site is built by Asn319 and Gly321. Residue Thr322 coordinates 4-imidazolone-5-propanoate.

The protein belongs to the metallo-dependent hydrolases superfamily. HutI family. It depends on Zn(2+) as a cofactor. The cofactor is Fe(3+).

Its subcellular location is the cytoplasm. The enzyme catalyses 4-imidazolone-5-propanoate + H2O = N-formimidoyl-L-glutamate. Its pathway is amino-acid degradation; L-histidine degradation into L-glutamate; N-formimidoyl-L-glutamate from L-histidine: step 3/3. Its function is as follows. Catalyzes the hydrolytic cleavage of the carbon-nitrogen bond in imidazolone-5-propanoate to yield N-formimidoyl-L-glutamate. It is the third step in the universal histidine degradation pathway. This is Imidazolonepropionase from Rhizobium rhizogenes (Agrobacterium rhizogenes).